A 1065-amino-acid chain; its full sequence is DNA ligase 4 (1065 aa).

The tract at residues 1–20 (MAVHAPYNHAPPPTQEINGQ) is disordered. 10 residues coordinate ATP: glutamate 295, lysine 297, leucine 298, arginine 302, glutamate 357, phenylalanine 387, glutamate 452, lysine 457, lysine 474, and lysine 476. Lysine 297 (N6-AMP-lysine intermediate) is an active-site residue. Glutamate 357 is a Mg(2+) binding site. A Mg(2+)-binding site is contributed by glutamate 452. Positions 696–775 (VETSIFSDMT…TALPFLKEFL (80 aa)) constitute a BRCT 1 domain. The disordered stretch occupies residues 825 to 928 (GEDKDEIDVE…SDVGVNGDDY (104 aa)). 2 stretches are compositionally biased toward basic and acidic residues: residues 834-864 (EESR…KKLQ) and 886-900 (MSLK…ERSR). Positions 954–1064 (DEDRIFYHLA…TLLDEDLYKP (111 aa)) constitute a BRCT 2 domain.

The protein belongs to the ATP-dependent DNA ligase family. Requires Mg(2+) as cofactor.

The protein localises to the nucleus. It catalyses the reaction ATP + (deoxyribonucleotide)n-3'-hydroxyl + 5'-phospho-(deoxyribonucleotide)m = (deoxyribonucleotide)n+m + AMP + diphosphate.. Its function is as follows. DNA ligase involved in DNA non-homologous end joining (NHEJ); required for double-strand break (DSB) repair. The chain is DNA ligase 4 (LIG4) from Cryptococcus neoformans var. neoformans serotype D (strain B-3501A) (Filobasidiella neoformans).